We begin with the raw amino-acid sequence, 151 residues long: Transcriptional regulator MraZ (151 aa).

SpoVT-AbrB domains lie at 5–52 (ANAI…PLDE) and 81–124 (AVDL…DEDA).

The protein belongs to the MraZ family. As to quaternary structure, forms oligomers.

The protein resides in the cytoplasm. It localises to the nucleoid. This chain is Transcriptional regulator MraZ, found in Pseudomonas fluorescens (strain ATCC BAA-477 / NRRL B-23932 / Pf-5).